The primary structure comprises 3838 residues: Replicase polyprotein 1ab (3838 aa).

A C4-type; atypical zinc finger spans residues 8 to 28; sequence CMCTPAARVFWNAGQVFCTRC. One can recognise a Peptidase C31 domain in the interval 69 to 180; sequence ECTPSGCCWL…QPFCPFEEAH (112 aa). The segment at 69–182 is PCP1-alpha; it reads ECTPSGCCWL…FCPFEEAHSD (114 aa). Catalysis depends on for Nsp1-alpha papain-like cysteine proteinase activity residues C76 and H146. Residues 203–204 form an important for host EIF2AK2 inhibition region; it reads MM. Residues 269–384 are PCP1-beta; it reads PNVFDGKCWL…IFRFGAHKWY (116 aa). Residues 269 to 385 form the Peptidase C32 domain; the sequence is PNVFDGKCWL…FRFGAHKWYG (117 aa). Catalysis depends on for Nsp1-beta papain-like cysteine proteinase activity residues C276 and H345. Positions 418–505 are OTU-like; it reads ITTYSPPTDG…GVHWEVEVRS (88 aa). Positions 420 to 527 constitute a Peptidase C33 domain; the sequence is TYSPPTDGSC…VGVCSEGCVA (108 aa). Catalysis depends on for Nsp2 cysteine proteinase activity residues C429 and H498. Disordered stretches follow at residues 728–758 and 1027–1064; these read AIGS…SHPA and SVTP…SHAS. Positions 737-749 are enriched in basic and acidic residues; that stretch reads DSKRENMHNSRED. 5 consecutive transmembrane segments (helical) span residues 1094-1114, 1117-1137, 1162-1182, 1211-1231, and 1235-1255; these read LMTW…TLFS, GSMA…LLLC, GVFG…SNPV, GLVV…LGGS, and WHVI…VYVV. Residues 1132-1255 form an HD1 region; sequence LALLLCRSYP…DLALSLVYVV (124 aa). A WCCH region spans residues 1310 to 1334; sequence TGWRGCWRGESPIHQPHQKPIAYAN. A run of 4 helical transmembrane segments spans residues 1450–1470, 1526–1546, 1556–1576, and 1592–1612; these read TLAV…GLWF, EVGI…RLAL, AFCA…PILL, and FLVF…GLLW. Positions 1451-1612 are HD2; the sequence is LAVAQVSVWT…LSLGITGLLW (162 aa). Residues 1677-1879 enclose the Peptidase S32 domain; it reads GAFRTHKPCL…SLLASVPVME (203 aa). Active-site charge relay system; for 3C-like serine proteinase activity residues include H1715, D1740, and S1793. 5 helical membrane-spanning segments follow: residues 1875-1895, 1916-1936, 1960-1980, 2003-2023, and 2029-2048; these read VPVM…FLLW, ILPA…LAWA, LAFY…AFAG, SYVP…LWLF, and HNML…RYFA. The interval 1902 to 2023 is HD3; that stretch reads WTPIVAVGFF…HALGVILWLF (122 aa). The NiRAN domain occupies 2364–2527; sequence IISQLQGLTT…LPYKLYPVRG (164 aa). Residues 2765–2899 enclose the RdRp catalytic domain; that stretch reads AGRCLEADLA…LYAERPTFPN (135 aa). Residues 3021 to 3084 form the AV ZBD domain; sequence GKKFRHCGIC…SPVGAGRSPL (64 aa). Residues C3027, C3030, C3040, C3045, H3048, H3050, H3052, H3054, C3061, H3063, C3070, and C3073 each contribute to the Zn(2+) site. The (+)RNA virus helicase ATP-binding domain occupies 3134 to 3293; it reads DLPDGDYQVV…VFDQMPQKQL (160 aa). 3168–3175 is a binding site for ATP; that stretch reads VGPPGSGK. One can recognise a (+)RNA virus helicase C-terminal domain in the interval 3294–3423; that stretch reads TTIYRFGPNI…FSRGDDLVVL (130 aa). The region spanning 3462–3559 is the AV-Nsp11N/CoV-Nsp15M domain; sequence EGSCMPLPQV…LTLYIRGEPQ (98 aa). One can recognise a NendoU domain in the interval 3561–3683; sequence LPETLVSTGR…MVWKGATAYF (123 aa). Residues H3592, H3607, and K3636 contribute to the active site.

It belongs to the arteriviridae polyprotein family. As to quaternary structure, nsp1-alpha papain-like: Interacts with host RNF31. In terms of assembly, interacts with host EIF2AK2; this interaction occurs in host stress granules and leads to EIF2AK2 inhibition. Interacts with host G3BP1; this interaction probably plays a role in Nsp1-beta-mediated inhibition of host EIF2AK2. Interacts with host DDX18; this interaction redistributes host DDX18 to the cytoplasm. As to quaternary structure, interacts with host IFITM1. In terms of assembly, interacts with host DDX5. Interacts with host OTULIN. As to quaternary structure, interacts with host LGALS3. In terms of processing, specific enzymatic cleavages in vivo by its own proteases yield mature proteins. Nsp1 is autocleaved into two subunits, Nsp1-alpha and Nsp1-beta. There are two alternative pathways for processing. Either nsp4-5 is cleaved, which represents the major pathway or the nsp5-6 and nsp6-7 are processed, which represents the minor pathway. The major pathway occurs when nsp2 acts as a cofactor for nsp4.

It is found in the host nucleus. The protein resides in the host cytoplasm. The protein localises to the host membrane. It localises to the host endoplasmic reticulum. Its subcellular location is the host perinuclear region. The catalysed reaction is RNA(n) + a ribonucleoside 5'-triphosphate = RNA(n+1) + diphosphate. It catalyses the reaction ATP + H2O = ADP + phosphate + H(+). It carries out the reaction Thiol-dependent hydrolysis of ester, thioester, amide, peptide and isopeptide bonds formed by the C-terminal Gly of ubiquitin (a 76-residue protein attached to proteins as an intracellular targeting signal).. The enzyme catalyses uridylyl-uridylyl-ribonucleotide-RNA = a 3'-end uridylyl-2',3'-cyclophospho-uridine-RNA + a 5'-end dephospho-ribonucleoside-RNA. Functionally, contains the activities necessary for the transcription of negative stranded RNA, leader RNA, subgenomic mRNAs and progeny virion RNA as well as proteinases responsible for the cleavage of the polyprotein into functional products. Its function is as follows. Inhibits host IFN-beta production. Plays a role in the degradation of the host transcriptional activator CREBBP protein. The degradation of host CREBBP which is a key component of the IFN enhanceosome is likely responsible for the inhibition of interferon mediated by Nsp1-alpha. Also participates in the inhibition of host NF-kappa-B activation by counteracting LUBAC-dependent induction of NF-kappa-B. Reduces host NEMO ubiquitination by blocking the interaction between the two LUBAC complex components RNF31 and SHARPIN. In terms of biological role, plays a role in blocking host mRNA nuclear export to the cytoplasm and subversion of host protein synthesis. Additionally, inhibits the interferon-activated JAK/STAT signal transduction by mediating the ubiquitination and subsequent proteasomal degradation of host KPNA1. Repurposes the host antiviral stress granules into a proviral platform to counteract the EIF2AK2/PKR restriction, thereby regulating the host inflammatory response. Multifunctional protein that acts as a viral protease and as a viral antagonist of host immune response. Cleaves the nsp2/nsp3 site in the viral polyprotein. Displays deubiquitinating activity that cleaves both ubiquitinated and ISGylated products and therefore inhibits ubiquitin and ISG15-dependent host innate immunity. Also deubiquinates host NFKBIA, thereby interfering with NFKBIA degradation and impairing subsequent NF-kappa-B activation. Functionally, plays a role in the inhibition of the immune response by interacting with host IFITM1. This interaction leads to the proteasomal degradation of the IFN-induced antiviral protein IFITM1. Its function is as follows. Cleaves the majority of cleavage sites present in the C-terminus of the polyprotein. Triggers host apoptosis through caspase-3, -8, and -9 activations. Subverts host innate immune responses through its protease activity. Targets the NF-kappa-B essential modulator NEMO and mediates its cleavage. Blocks host interferon beta induction and downstream signaling by cleaving mitochondrial MAVS, dislodging it from the mitochondria. Impairs host defense by cleaving host mRNA-decapping enzyme DCP1A to attenuate its antiviral activity. In terms of biological role, plays a role in the initial induction of autophagosomes from host endoplasmic reticulum. Plays a role in the inhibition of host STAT3 signaling pathway by inducing the degradation of STAT3. Functionally, responsible for replication and transcription of the viral RNA genome. Its function is as follows. Displays RNA and DNA duplex-unwinding activities with 5' to 3' polarity. In terms of biological role, plays a role in viral transcription/replication and prevents the simultaneous activation of host cell dsRNA sensors, such as MDA5/IFIH1, OAS, PKR and NLRP3 inflammasome. Acts by degrading the 5'-polyuridines generated during replication of the poly(A) region of viral genomic and subgenomic RNAs. Catalyzes a two-step reaction in which a 2'3'-cyclic phosphate (2'3'-cP) is first generated by 2'-O transesterification, which is then hydrolyzed to a 3'-phosphate (3'-P). If not degraded, poly(U) RNA would hybridize with poly(A) RNA tails and activate host dsRNA sensors. Also plays a role in the inhibition of host type I interferon production by recruiting host OTULIN to promote removal of linear ubiquitination targeting host NEMO. This is Replicase polyprotein 1ab from Sus scrofa (Pig).